The following is a 662-amino-acid chain: Putative cysteine-rich receptor-like protein kinase 16 (662 aa).

The N-terminal stretch at 1 to 26 (MIFIMKLKNLLPIFCFFLVSFSISSA) is a signal peptide. 2 consecutive Gnk2-homologous domains span residues 27-131 (QKCG…NRSF) and 137-244 (MTPF…LYQF). Over 27–277 (QKCGKTGLFK…DDGGKISTRN (251 aa)) the chain is Extracellular. Asn-55, Asn-64, Asn-106, Asn-128, Asn-145, Asn-152, and Asn-206 each carry an N-linked (GlcNAc...) asparagine glycan. The helical transmembrane segment at 278 to 298 (ILGITVALAFFITVLLVLGYA) threads the bilayer. Residues 299 to 662 (LSRRRKAYQE…DASITSVDLR (364 aa)) lie on the Cytoplasmic side of the membrane. A Protein kinase domain is found at 335-612 (FQKSNKLGHG…VFQMLTNTFL (278 aa)). Residues 341–349 (LGHGGFGEV) and Lys-363 contribute to the ATP site. The Proton acceptor role is filled by Asp-460.

This sequence belongs to the protein kinase superfamily. Ser/Thr protein kinase family. CRK subfamily.

It localises to the membrane. It carries out the reaction L-seryl-[protein] + ATP = O-phospho-L-seryl-[protein] + ADP + H(+). The catalysed reaction is L-threonyl-[protein] + ATP = O-phospho-L-threonyl-[protein] + ADP + H(+). This chain is Putative cysteine-rich receptor-like protein kinase 16 (CRK16), found in Arabidopsis thaliana (Mouse-ear cress).